A 166-amino-acid polypeptide reads, in one-letter code: Plastocyanin, chloroplastic (166 aa).

The N-terminal 67 residues, M1 to A67, are a transit peptide targeting the chloroplast. The Plastocyanin-like domain maps to V68–N166. H104, C151, H154, and M159 together coordinate Cu cation.

Belongs to the plastocyanin family. It depends on Cu(2+) as a cofactor.

It localises to the plastid. The protein resides in the chloroplast thylakoid membrane. Its function is as follows. Participates in electron transfer between P700 and the cytochrome b6-f complex in photosystem I. This chain is Plastocyanin, chloroplastic (PETE), found in Fritillaria agrestis (Stinkbells).